Reading from the N-terminus, the 62-residue chain is Small ribosomal subunit protein uS14 (62 aa).

4 residues coordinate Zn(2+): cysteine 25, cysteine 28, cysteine 41, and cysteine 44.

It belongs to the universal ribosomal protein uS14 family. Zinc-binding uS14 subfamily. As to quaternary structure, part of the 30S ribosomal subunit. Contacts proteins S3 and S10. Requires Zn(2+) as cofactor.

Its function is as follows. Binds 16S rRNA, required for the assembly of 30S particles and may also be responsible for determining the conformation of the 16S rRNA at the A site. This Aquifex aeolicus (strain VF5) protein is Small ribosomal subunit protein uS14.